Here is a 191-residue protein sequence, read N- to C-terminus: Holliday junction branch migration complex subunit RuvA (191 aa).

A domain I region spans residues 1 to 64 (MIGRLTGTLA…EDAQLLYGFL (64 aa)). The interval 65 to 138 (TATERATFRQ…KGKLGPDLAL (74 aa)) is domain II. Residues 138–142 (LPGAV) are flexible linker. Residues 143–191 (IRNEAQSDIVQALIALGYNEREAAAAIKPLPADVGVSDGIKLALRALGK) form a domain III region.

Belongs to the RuvA family. As to quaternary structure, homotetramer. Forms an RuvA(8)-RuvB(12)-Holliday junction (HJ) complex. HJ DNA is sandwiched between 2 RuvA tetramers; dsDNA enters through RuvA and exits via RuvB. An RuvB hexamer assembles on each DNA strand where it exits the tetramer. Each RuvB hexamer is contacted by two RuvA subunits (via domain III) on 2 adjacent RuvB subunits; this complex drives branch migration. In the full resolvosome a probable DNA-RuvA(4)-RuvB(12)-RuvC(2) complex forms which resolves the HJ.

It is found in the cytoplasm. Its function is as follows. The RuvA-RuvB-RuvC complex processes Holliday junction (HJ) DNA during genetic recombination and DNA repair, while the RuvA-RuvB complex plays an important role in the rescue of blocked DNA replication forks via replication fork reversal (RFR). RuvA specifically binds to HJ cruciform DNA, conferring on it an open structure. The RuvB hexamer acts as an ATP-dependent pump, pulling dsDNA into and through the RuvAB complex. HJ branch migration allows RuvC to scan DNA until it finds its consensus sequence, where it cleaves and resolves the cruciform DNA. This is Holliday junction branch migration complex subunit RuvA from Leptothrix cholodnii (strain ATCC 51168 / LMG 8142 / SP-6) (Leptothrix discophora (strain SP-6)).